The primary structure comprises 220 residues: LOB domain-containing protein 31 (220 aa).

The LOB domain occupies 10 to 112 (GPCGACKFLR…AELAYVQTQL (103 aa)). Residues 117–172 (GLPPPNSQNNSRTEAASSSNVPLISSVDSKDNMSSSSSHIPCMSQQQEQEQPKEAI) are disordered. Over residues 123 to 139 (SQNNSRTEAASSSNVPL) the composition is skewed to polar residues.

It belongs to the LOB domain-containing protein family. In terms of tissue distribution, expressed in roots, stems and flowers.

The chain is LOB domain-containing protein 31 (LBD31) from Arabidopsis thaliana (Mouse-ear cress).